The following is a 976-amino-acid chain: Peptidylglycine alpha-amidating monooxygenase (976 aa).

A signal peptide spans 1–25 (MAGRARSGLLLLLLGLLALQSSCLA). Residues 1–497 (MAGRARSGLL…EGPWEPEPSG (497 aa)) form a peptidylglycine alpha-hydroxylating monooxygenase region. Residues 26–35 (FRSPLSVFKR) constitute a propeptide that is removed on maturation. Residues 36 to 866 (FKETTRSFSN…QKLSTEPGSG (831 aa)) lie on the Intragranular side of the membrane. Disulfide bonds link cysteine 47-cysteine 186, cysteine 81-cysteine 126, cysteine 114-cysteine 131, cysteine 227-cysteine 334, and cysteine 293-cysteine 315. Histidine 107 and histidine 108 together coordinate Cu(2+). Residues histidine 172, histidine 242, histidine 244, and methionine 314 each coordinate Cu(2+). The tract at residues 498–820 (DFHVEEELDW…LTEKMEHRSV (323 aa)) is peptidyl-alpha-hydroxyglycine alpha-amidating lyase. NHL repeat units lie at residues 501–544 (VEEE…NSFD), 570–611 (AEIL…LDPH), 620–665 (LGRS…FSPS), and 673–717 (GEES…FKTD). Ca(2+) is bound at residue valine 520. Arginine 533 is an a protein binding site. Histidine 585 lines the Zn(2+) pocket. Leucine 587 contributes to the Ca(2+) binding site. Cysteine 634 and cysteine 655 are disulfide-bonded. Tyrosine 654 is an a protein binding site. Residue histidine 690 coordinates Zn(2+). Cysteine 702 and cysteine 713 are disulfide-bonded. Arginine 706 provides a ligand contact to a protein. The N-linked (GlcNAc...) asparagine glycan is linked to asparagine 765. An NHL 5 repeat occupies 769–812 (GEIIDVFKPVRKHFDMPHDIVASEDGTVYIGDAHTNTVWKFTLT). The residue at position 774 (valine 774) is a Sulfotyrosine. Histidine 786 is a Zn(2+) binding site. Aspartate 787 provides a ligand contact to Ca(2+). Glutamate 792 bears the Sulfotyrosine mark. A helical transmembrane segment spans residues 867 to 890 (VSVVLITTLLVIPVLVLLAIVMFI). Topologically, residues 891–976 (RWKKSRAFGD…APLPKPAPSS (86 aa)) are cytoplasmic. Serine 921, serine 932, and serine 945 each carry phosphoserine. The interaction with RASSF9 stretch occupies residues 928–945 (NFFASRKGYSRKGFDRVS). The tract at residues 940-976 (GFDRVSTEGSDQEKDEDDGTESEEEYSAPLPKPAPSS) is disordered. Phosphothreonine is present on threonine 946. Residue serine 949 is modified to Phosphoserine. Acidic residues predominate over residues 952–965 (EKDEDDGTESEEEY). Phosphothreonine is present on threonine 959. Serine 961 bears the Phosphoserine mark.

This sequence in the C-terminal section; belongs to the peptidyl-alpha-hydroxyglycine alpha-amidating lyase family. In the N-terminal section; belongs to the copper type II ascorbate-dependent monooxygenase family. Monomer. Interacts with RASSF9. Zn(2+) is required as a cofactor. The cofactor is Cu(2+).

It is found in the cytoplasmic vesicle. The protein localises to the secretory vesicle membrane. Its subcellular location is the membrane. It localises to the secreted. It carries out the reaction a [peptide]-C-terminal glycine + 2 L-ascorbate + O2 = a [peptide]-C-terminal (2S)-2-hydroxyglycine + 2 monodehydro-L-ascorbate radical + H2O. The enzyme catalyses a [peptide]-C-terminal (2S)-2-hydroxyglycine = a [peptide]-C-terminal amide + glyoxylate. It catalyses the reaction N-dodecanoylglycine + 2 L-ascorbate + O2 = N-dodecanoyl-(2S)-hydroxyglycine + 2 monodehydro-L-ascorbate radical + H2O. The catalysed reaction is N-dodecanoyl-(2S)-hydroxyglycine = dodecanamide + glyoxylate. It carries out the reaction N-(9Z,12Z,15Z)-octadecatrienoylglycine + 2 L-ascorbate + O2 = N-(9Z,12Z,15Z)-octadecatrienoyl-(2S)-hydroxyglycine + 2 monodehydro-L-ascorbate radical + H2O. The enzyme catalyses N-(9Z,12Z,15Z)-octadecatrienoyl-(2S)-hydroxyglycine = (9Z,12Z,15Z)-octadecatrienamide + glyoxylate. It catalyses the reaction N-(9Z-octadecenoyl)glycine + 2 L-ascorbate + O2 = N-(9Z-octadecenoyl)-(2S)-hydroxyglycine + 2 monodehydro-L-ascorbate radical + H2O. The catalysed reaction is N-(9Z-octadecenoyl)-(2S)-hydroxyglycine = (9Z)-octadecenamide + glyoxylate. It carries out the reaction N-tetradecanoylglycine + 2 L-ascorbate + O2 = N-tetradecanoyl-(2S)-hydroxyglycine + 2 monodehydro-L-ascorbate radical + H2O. The enzyme catalyses N-tetradecanoyl-(2S)-hydroxyglycine = tetradecamide + glyoxylate. It catalyses the reaction N-decanoylglycine + 2 L-ascorbate + O2 = N-decanoyl-(2S)-hydroxyglycine + 2 monodehydro-L-ascorbate radical + H2O. The catalysed reaction is N-decanoyl-(2S)-hydroxyglycine = decanamide + glyoxylate. It carries out the reaction N-octanoylglycine + 2 L-ascorbate + O2 = N-octanoyl-(2S)-hydroxyglycine + 2 monodehydro-L-ascorbate radical + H2O. The enzyme catalyses N-octanoyl-(2S)-hydroxyglycine = octanamide + glyoxylate. With respect to regulation, PAM activity is inhibited by EDTA, phenylglyoxal and diethyl pyrocarbonate. PAL activity is stimulated by cadmium and inhibited by mercury. Bifunctional enzyme that catalyzes amidation of the C-terminus of proteins. Alpha-amidation is present at the C-terminus of many endocrine hormones and neuropeptides and is required for their activity. C-terminal amidation also takes place in response to protein fragmentation triggered by oxidative stress, promoting degradation of amidated protein fragments by the proteasome. Alpha-amidation involves two sequential reactions, both of which are catalyzed by separate catalytic domains of the enzyme. The first step, catalyzed by peptidyl alpha-hydroxylating monooxygenase (PHM) domain, is the copper-, ascorbate-, and O2- dependent stereospecific hydroxylation (with S stereochemistry) at the alpha-carbon (C-alpha) of the C-terminal glycine of the peptidylglycine substrate. The second step, catalyzed by the peptidylglycine amidoglycolate lyase (PAL) domain, is the zinc-dependent cleavage of the N-C-alpha bond, producing the alpha-amidated peptide and glyoxylate. Similarly, catalyzes the two-step conversion of an N-fatty acylglycine to a primary fatty acid amide and glyoxylate. This is Peptidylglycine alpha-amidating monooxygenase from Rattus norvegicus (Rat).